We begin with the raw amino-acid sequence, 143 residues long: MFMGEYQHSIDEKGRLTIPAKFREGLGTSFVITRGLDQCLFAYPQDEWKQLEERLKSLPFTKADARAFTRFFFSGATECEWDKQGRVNIPPNLREHAGMQKECVIIGVSNRVEVWSKERWEDYFAQSEGSFGEIAEKLVDFNL.

SpoVT-AbrB domains lie at 5 to 47 (EYQH…PQDE) and 76 to 119 (ATEC…SKER).

The protein belongs to the MraZ family. As to quaternary structure, forms oligomers.

The protein localises to the cytoplasm. It localises to the nucleoid. The chain is Transcriptional regulator MraZ from Brevibacillus brevis (strain 47 / JCM 6285 / NBRC 100599).